Consider the following 411-residue polypeptide: Putative nickel insertion protein (411 aa).

It belongs to the LarC family.

The chain is Putative nickel insertion protein from Methanothermobacter thermautotrophicus (strain ATCC 29096 / DSM 1053 / JCM 10044 / NBRC 100330 / Delta H) (Methanobacterium thermoautotrophicum).